Consider the following 181-residue polypeptide: Crossover junction endodeoxyribonuclease RuvC (181 aa).

Catalysis depends on residues Asp7, Glu67, and Asp139. 3 residues coordinate Mg(2+): Asp7, Glu67, and Asp139.

It belongs to the RuvC family. In terms of assembly, homodimer which binds Holliday junction (HJ) DNA. The HJ becomes 2-fold symmetrical on binding to RuvC with unstacked arms; it has a different conformation from HJ DNA in complex with RuvA. In the full resolvosome a probable DNA-RuvA(4)-RuvB(12)-RuvC(2) complex forms which resolves the HJ. It depends on Mg(2+) as a cofactor.

It is found in the cytoplasm. The catalysed reaction is Endonucleolytic cleavage at a junction such as a reciprocal single-stranded crossover between two homologous DNA duplexes (Holliday junction).. Its function is as follows. The RuvA-RuvB-RuvC complex processes Holliday junction (HJ) DNA during genetic recombination and DNA repair. Endonuclease that resolves HJ intermediates. Cleaves cruciform DNA by making single-stranded nicks across the HJ at symmetrical positions within the homologous arms, yielding a 5'-phosphate and a 3'-hydroxyl group; requires a central core of homology in the junction. The consensus cleavage sequence is 5'-(A/T)TT(C/G)-3'. Cleavage occurs on the 3'-side of the TT dinucleotide at the point of strand exchange. HJ branch migration catalyzed by RuvA-RuvB allows RuvC to scan DNA until it finds its consensus sequence, where it cleaves and resolves the cruciform DNA. The protein is Crossover junction endodeoxyribonuclease RuvC of Cupriavidus necator (strain ATCC 17699 / DSM 428 / KCTC 22496 / NCIMB 10442 / H16 / Stanier 337) (Ralstonia eutropha).